Here is a 154-residue protein sequence, read N- to C-terminus: 3-hydroxyacyl-[acyl-carrier-protein] dehydratase FabZ (154 aa).

The active site involves H55.

This sequence belongs to the thioester dehydratase family. FabZ subfamily.

The protein localises to the cytoplasm. The enzyme catalyses a (3R)-hydroxyacyl-[ACP] = a (2E)-enoyl-[ACP] + H2O. Its function is as follows. Involved in unsaturated fatty acids biosynthesis. Catalyzes the dehydration of short chain beta-hydroxyacyl-ACPs and long chain saturated and unsaturated beta-hydroxyacyl-ACPs. This is 3-hydroxyacyl-[acyl-carrier-protein] dehydratase FabZ from Oleidesulfovibrio alaskensis (strain ATCC BAA-1058 / DSM 17464 / G20) (Desulfovibrio alaskensis).